The following is a 288-amino-acid chain: Phosphatidylserine decarboxylase proenzyme (288 aa).

Active-site charge relay system; for autoendoproteolytic cleavage activity residues include Asp90, His147, and Ser252. The Schiff-base intermediate with substrate; via pyruvic acid; for decarboxylase activity role is filled by Ser252. Position 252 is a pyruvic acid (Ser); by autocatalysis (Ser252).

Belongs to the phosphatidylserine decarboxylase family. PSD-B subfamily. Prokaryotic type I sub-subfamily. In terms of assembly, heterodimer of a large membrane-associated beta subunit and a small pyruvoyl-containing alpha subunit. Pyruvate serves as cofactor. Is synthesized initially as an inactive proenzyme. Formation of the active enzyme involves a self-maturation process in which the active site pyruvoyl group is generated from an internal serine residue via an autocatalytic post-translational modification. Two non-identical subunits are generated from the proenzyme in this reaction, and the pyruvate is formed at the N-terminus of the alpha chain, which is derived from the carboxyl end of the proenzyme. The autoendoproteolytic cleavage occurs by a canonical serine protease mechanism, in which the side chain hydroxyl group of the serine supplies its oxygen atom to form the C-terminus of the beta chain, while the remainder of the serine residue undergoes an oxidative deamination to produce ammonia and the pyruvoyl prosthetic group on the alpha chain. During this reaction, the Ser that is part of the protease active site of the proenzyme becomes the pyruvoyl prosthetic group, which constitutes an essential element of the active site of the mature decarboxylase.

It is found in the cell membrane. It carries out the reaction a 1,2-diacyl-sn-glycero-3-phospho-L-serine + H(+) = a 1,2-diacyl-sn-glycero-3-phosphoethanolamine + CO2. It functions in the pathway phospholipid metabolism; phosphatidylethanolamine biosynthesis; phosphatidylethanolamine from CDP-diacylglycerol: step 2/2. Catalyzes the formation of phosphatidylethanolamine (PtdEtn) from phosphatidylserine (PtdSer). In Pseudomonas fluorescens (strain ATCC BAA-477 / NRRL B-23932 / Pf-5), this protein is Phosphatidylserine decarboxylase proenzyme.